We begin with the raw amino-acid sequence, 271 residues long: Gasdermin bGSDM (271 aa).

A lipid anchor (S-palmitoyl cysteine) is attached at Cys7. 4 consecutive transmembrane segments (beta stranded) span residues 74–90 (IAGTQSADLDVDLGLSV), 102–120 (TLGVDAAFARAATVQFEFS), 168–185 (RINVAAKDSNKQSLGLNL), and 194–210 (ANVKIAAAAASGSTVSF).

It belongs to the bacterial gasdermin family. In terms of assembly, monomer. Forms large, homooligomeric ring-shaped pores when inserted in membranes. Post-translationally, palmitoylation helps stabilize the inactive state; may self palmitoylate. Palmitoylation plays a significant role in pore formation.

The protein resides in the cytoplasm. It is found in the cell inner membrane. The full-length protein before cleavage is inactive: intramolecular interactions between the N-terminal domain and the C-terminal region as well as the lipid modification, mediate autoinhibition. The pyroptosis-like-inducing activity is carried by the released N-terminal domain (Gasdermin bGSDM, N-terminus). In terms of biological role, involved in defense against bacteriophages. When this probable 4 gene operon (bGSDM-FE772_23060-FE772_23065-FE772_23070) is inserted into E.coli it provides nearly 100-fold protection against phages T5 and T6 and about 8-fold against phage T4. The operon without bGSDM no longer protects against phage. Cleavage of this precursor by its dedicated protease(s) releases the active moiety (gasdermin bGSDM, N-terminus) which inserts into membranes, forming pores and triggering cell death. Functionally, pore-forming protein that causes membrane permeabilization via a pyroptosis-like activity. Makes ring-like pores when released. The protein is Gasdermin bGSDM of Lysobacter enzymogenes.